Reading from the N-terminus, the 368-residue chain is Quinolinate synthase (368 aa).

Histidine 46 and serine 63 together coordinate iminosuccinate. Cysteine 110 contacts [4Fe-4S] cluster. Residues 141-143 and serine 162 contribute to the iminosuccinate site; that span reads YVN. Cysteine 230 provides a ligand contact to [4Fe-4S] cluster. Iminosuccinate-binding positions include 256 to 258 and threonine 273; that span reads HPE. Cysteine 320 is a [4Fe-4S] cluster binding site.

Belongs to the quinolinate synthase family. Type 3 subfamily. Requires [4Fe-4S] cluster as cofactor.

The protein localises to the cytoplasm. The catalysed reaction is iminosuccinate + dihydroxyacetone phosphate = quinolinate + phosphate + 2 H2O + H(+). It participates in cofactor biosynthesis; NAD(+) biosynthesis; quinolinate from iminoaspartate: step 1/1. Catalyzes the condensation of iminoaspartate with dihydroxyacetone phosphate to form quinolinate. The sequence is that of Quinolinate synthase from Bacillus cereus (strain ZK / E33L).